A 446-amino-acid polypeptide reads, in one-letter code: ATP synthase subunit b-delta (446 aa).

An ATP synthase subunit b region spans residues 1–168; sequence MSTFIGQLFG…PATADVDYPL (168 aa). The chain crosses the membrane as a helical span at residues 4-24; that stretch reads FIGQLFGFAVIVYLVWRFIVP. The interval 169-446 is ATP synthase subunit delta; that stretch reads LAKMRSASRR…LAAAEARLPD (278 aa).

In the N-terminal section; belongs to the ATPase B chain family. The protein in the C-terminal section; belongs to the ATPase delta chain family. F-type ATPases have 2 components, F(1) - the catalytic core - and F(0) - the membrane proton channel. F(1) has five subunits: alpha(3), beta(3), gamma(1), delta(1), epsilon(1). F(0) has three main subunits: a(1), b(2) and c(10-14). The alpha and beta chains form an alternating ring which encloses part of the gamma chain. F(1) is attached to F(0) by a central stalk formed by the gamma and epsilon chains, while a peripheral stalk is formed by the delta and b chains.

It localises to the cell membrane. F(1)F(0) ATP synthase produces ATP from ADP in the presence of a proton or sodium gradient. F-type ATPases consist of two structural domains, F(1) containing the extramembraneous catalytic core and F(0) containing the membrane proton channel, linked together by a central stalk and a peripheral stalk. During catalysis, ATP synthesis in the catalytic domain of F(1) is coupled via a rotary mechanism of the central stalk subunits to proton translocation. In terms of biological role, this fusion protein includes a component of the F(0) channel (subunit b) and of the F(1) subunit (subunit delta). Two copies of subunit b and one of delta together form the peripheral 'stator' stalk which links F(1) to F(0). This chain is ATP synthase subunit b-delta (atpFH), found in Mycobacterium tuberculosis (strain CDC 1551 / Oshkosh).